Here is a 284-residue protein sequence, read N- to C-terminus: RNase adapter protein RapZ (284 aa).

ATP is bound at residue 8-15; that stretch reads GRSGSGKS. 56–59 contributes to the GTP binding site; sequence DVRN. An RNA-binding region spans residues 266–284; the sequence is RSRGKNVQSRHRTLEKRRS.

It belongs to the RapZ-like family. RapZ subfamily. As to quaternary structure, homotrimer.

Its function is as follows. Modulates the synthesis of GlmS, by affecting the processing and stability of the regulatory small RNA GlmZ. When glucosamine-6-phosphate (GlcN6P) concentrations are high in the cell, RapZ binds GlmZ and targets it to cleavage by RNase E. Consequently, GlmZ is inactivated and unable to activate GlmS synthesis. Under low GlcN6P concentrations, RapZ is sequestered and inactivated by an other regulatory small RNA, GlmY, preventing GlmZ degradation and leading to synthesis of GlmS. The chain is RNase adapter protein RapZ from Erwinia tasmaniensis (strain DSM 17950 / CFBP 7177 / CIP 109463 / NCPPB 4357 / Et1/99).